The sequence spans 131 residues: Small ribosomal subunit protein uS11 (131 aa).

The protein belongs to the universal ribosomal protein uS11 family. Part of the 30S ribosomal subunit. Interacts with proteins S7 and S18. Binds to IF-3.

Its function is as follows. Located on the platform of the 30S subunit, it bridges several disparate RNA helices of the 16S rRNA. Forms part of the Shine-Dalgarno cleft in the 70S ribosome. This Syntrophotalea carbinolica (strain DSM 2380 / NBRC 103641 / GraBd1) (Pelobacter carbinolicus) protein is Small ribosomal subunit protein uS11.